Consider the following 141-residue polypeptide: MKENDVVLRTVTKIVVFILLTFGFYVFFAGHNNPGGGFIGGLIFSSAFILMFLAFDVHEVLESLPIDFKKLMIVGAIISALTAIVPVFFGKSFLYQSEAYIHFPLLGELHVTTITLFELGILLTVVGVIVTIMLALSGGKS.

A run of 4 helical transmembrane segments spans residues 10-30 (TVTKIVVFILLTFGFYVFFAG), 35-55 (GGGFIGGLIFSSAFILMFLAF), 70-90 (KLMIVGAIISALTAIVPVFFG), and 116-136 (LFELGILLTVVGVIVTIMLAL).

This sequence belongs to the CPA3 antiporters (TC 2.A.63) subunit B family. May form a heterooligomeric complex that consists of seven subunits: mnhA2, mnhB2, mnhC2, mnhD2, mnhE2, mnhF2 and mnhG2.

The protein resides in the cell membrane. The chain is Putative antiporter subunit mnhB2 (mnhB2) from Staphylococcus haemolyticus (strain JCSC1435).